Consider the following 384-residue polypeptide: S-adenosylmethionine synthase (384 aa).

His15 contacts ATP. Residue Asp17 coordinates Mg(2+). Glu43 provides a ligand contact to K(+). L-methionine is bound by residues Glu56 and Gln99. The interval 99 to 109 (QSPDINQGVDR) is flexible loop. ATP is bound by residues 164–166 (DAK), 230–231 (RF), Asp239, 245–246 (RK), Ala262, and Lys266. Asp239 serves as a coordination point for L-methionine. Position 270 (Lys270) interacts with L-methionine.

It belongs to the AdoMet synthase family. In terms of assembly, homotetramer; dimer of dimers. The cofactor is Mg(2+). K(+) serves as cofactor.

The protein resides in the cytoplasm. The catalysed reaction is L-methionine + ATP + H2O = S-adenosyl-L-methionine + phosphate + diphosphate. Its pathway is amino-acid biosynthesis; S-adenosyl-L-methionine biosynthesis; S-adenosyl-L-methionine from L-methionine: step 1/1. Its function is as follows. Catalyzes the formation of S-adenosylmethionine (AdoMet) from methionine and ATP. The overall synthetic reaction is composed of two sequential steps, AdoMet formation and the subsequent tripolyphosphate hydrolysis which occurs prior to release of AdoMet from the enzyme. This chain is S-adenosylmethionine synthase, found in Salmonella agona (strain SL483).